A 488-amino-acid chain; its full sequence is Coagulation factor X (488 aa).

The first 31 residues, 1–31 (MGRPLHLVLLSASLAGLLLLGESLFIRREQA), serve as a signal peptide directing secretion. Residues 32–40 (NNILARVTR) constitute a propeptide that is removed on maturation. The 45-residue stretch at 41–85 (ANSFLEEMKKGHLERECMEETCSYEEAREVFEDSDKTNEFWNKYK) folds into the Gla domain. Residues E46, E47, E54, E56, E59, E60, E65, E66, E69, E72, and E79 each carry the 4-carboxyglutamate modification. A disulfide bridge links C57 with C62. The region spanning 86–122 (DGDQCETSPCQNQGKCKDGLGEYTCTCLEGFEGKNCE) is the EGF-like 1; calcium-binding domain. Disulfide bonds link C90–C101, C95–C110, C112–C121, C129–C140, C136–C149, C151–C164, C172–C342, C241–C246, C261–C277, C390–C404, and C415–C443. At D103 the chain carries (3R)-3-hydroxyaspartate. Residues 125–165 (TRKLCSLDNGDCDQFCHEEQNSVVCSCARGYTLADNGKACI) form the EGF-like 2 domain. An O-glycosylated at one site region spans residues 183-203 (SVAQATSSSGEAPDSITWKPY). The propeptide at 183–234 (SVAQATSSSGEAPDSITWKPYDAADLDPTENPFDLLDFNQTQPERGDNNLTR) is activation peptide. O-linked (GalNAc...) threonine glycans are attached at residues T199 and T211. N-linked (GlcNAc...) asparagine glycosylation is found at N221 and N231. The 233-residue stretch at 235–467 (IVGGQECKDG…FLKWIDRSMK (233 aa)) folds into the Peptidase S1 domain. Residues H276 and D322 each act as charge relay system in the active site. S419 (charge relay system) is an active-site residue. The O-glycosylated at one site stretch occupies residues 476-485 (SHAPEVITSS).

Belongs to the peptidase S1 family. The two chains are formed from a single-chain precursor by the excision of two Arg residues and are held together by 1 or more disulfide bonds. Forms a heterodimer with SERPINA5. Interacts (inactive and activated) with ixolaris, an anticoagulant protein from Ixodes scapularis saliva. Interacts (activated) with iripin-8, a serine protease inhibitor from Ixodes ricinus saliva. Interacts (activated) with FXa-directed anticoagulant from Aedes albopictus saliva. Interacts (activated) with guianensin, an anticoagulant protein from Simulium guianense saliva. Interacts (activated) with simukunin, an anticoagulant protein from Simulium vittatum saliva. In terms of processing, the vitamin K-dependent, enzymatic carboxylation of some glutamate residues allows the modified protein to bind calcium. Post-translationally, N- and O-glycosylated. O-glycosylated with core 1 or possibly core 8 glycans. Proteolytically cleaved and activated by cathepsin CTSG. The activation peptide is cleaved by factor IXa (in the intrinsic pathway), or by factor VIIa (in the extrinsic pathway). In terms of processing, the iron and 2-oxoglutarate dependent 3-hydroxylation of aspartate and asparagine is (R) stereospecific within EGF domains. As to expression, plasma; synthesized in the liver.

The protein resides in the secreted. It catalyses the reaction Selective cleavage of Arg-|-Thr and then Arg-|-Ile bonds in prothrombin to form thrombin.. Its activity is regulated as follows. Inhibited by SERPINA5 and SERPINA10. Its function is as follows. Factor Xa is a vitamin K-dependent glycoprotein that converts prothrombin to thrombin in the presence of factor Va, calcium and phospholipid during blood clotting. Factor Xa activates pro-inflammatory signaling pathways in a protease-activated receptor (PAR)-dependent manner. Up-regulates expression of protease-activated receptors (PARs) F2R, F2RL1 and F2RL2 in dermal microvascular endothelial cells. Triggers the production of pro-inflammatory cytokines, such as MCP-1/CCL2 and IL6, in cardiac fibroblasts and umbilical vein endothelial cells in PAR-1/F2R-dependent manner. Triggers the production of pro-inflammatory cytokines, such as MCP-1/CCL2, IL6, TNF-alpha/TNF, IL-1beta/IL1B, IL8/CXCL8 and IL18, in endothelial cells and atrial tissues. Induces expression of adhesion molecules, such as ICAM1, VCAM1 and SELE, in endothelial cells and atrial tissues. Increases expression of phosphorylated ERK1/2 in dermal microvascular endothelial cells and atrial tissues. Triggers activation of the transcription factor NF-kappa-B in dermal microvascular endothelial cells and atrial tissues. Activates pro-inflammatory and pro-fibrotic responses in dermal fibroblasts and enhances wound healing probably via PAR-2/F2RL1-dependent mechanism. Activates barrier protective signaling responses in endothelial cells in PAR-2/F2RL1-dependent manner; the activity depends on the cleavage of PAR-2/F2RL1 by factor Xa. Up-regulates expression of plasminogen activator inhibitor 1 (SERPINE1) in atrial tissues. This Homo sapiens (Human) protein is Coagulation factor X (F10).